Here is a 714-residue protein sequence, read N- to C-terminus: ATP-dependent DNA helicase DinG (714 aa).

The Helicase ATP-binding domain maps to 17-294 (ALQDQIPDFI…TCMEQFRPKT (278 aa)). 54 to 61 (APTGVGKT) serves as a coordination point for ATP. Cysteine 120, cysteine 194, cysteine 199, and cysteine 205 together coordinate [4Fe-4S] cluster. Positions 248 to 251 (DEGH) match the DEAH box motif. One can recognise a Helicase C-terminal domain in the interval 517–698 (HIAEMAAYFR…VFPIEQPAVP (182 aa)).

The protein belongs to the helicase family. DinG subfamily. Type 1 sub-subfamily. It depends on [4Fe-4S] cluster as a cofactor.

The catalysed reaction is Couples ATP hydrolysis with the unwinding of duplex DNA at the replication fork by translocating in the 5'-3' direction. This creates two antiparallel DNA single strands (ssDNA). The leading ssDNA polymer is the template for DNA polymerase III holoenzyme which synthesizes a continuous strand.. The enzyme catalyses ATP + H2O = ADP + phosphate + H(+). Functionally, DNA-dependent ATPase and 5'-3' DNA helicase. Unwinds D-loops, R-loops, forked DNA and G-quadruplex DNA. In Salmonella paratyphi A (strain ATCC 9150 / SARB42), this protein is ATP-dependent DNA helicase DinG.